The sequence spans 195 residues: Phenoloxidase subunit 1 (195 aa).

Histidine 10 lines the Cu cation pocket. 3 N-linked (GlcNAc...) asparagine glycosylation sites follow: asparagine 77, asparagine 97, and asparagine 98.

This sequence belongs to the tyrosinase family. In terms of assembly, heterodimer. The cofactor is Cu(2+).

The protein localises to the secreted. It catalyses the reaction 2 L-dopa + O2 = 2 L-dopaquinone + 2 H2O. The catalysed reaction is L-tyrosine + O2 = L-dopaquinone + H2O. Functionally, this is a copper-containing oxidase that functions in the formation of pigments such as melanins and other polyphenolic compounds. Catalyzes the rate-limiting conversions of tyrosine to DOPA, DOPA to DOPA-quinone and possibly 5,6 dihydroxyindole to indole-5'6 quinone. In Simulium damnosum (Black fly), this protein is Phenoloxidase subunit 1.